Here is a 214-residue protein sequence, read N- to C-terminus: ATP phosphoribosyltransferase (214 aa).

The protein belongs to the ATP phosphoribosyltransferase family. Short subfamily. As to quaternary structure, heteromultimer composed of HisG and HisZ subunits.

Its subcellular location is the cytoplasm. The catalysed reaction is 1-(5-phospho-beta-D-ribosyl)-ATP + diphosphate = 5-phospho-alpha-D-ribose 1-diphosphate + ATP. It participates in amino-acid biosynthesis; L-histidine biosynthesis; L-histidine from 5-phospho-alpha-D-ribose 1-diphosphate: step 1/9. Its function is as follows. Catalyzes the condensation of ATP and 5-phosphoribose 1-diphosphate to form N'-(5'-phosphoribosyl)-ATP (PR-ATP). Has a crucial role in the pathway because the rate of histidine biosynthesis seems to be controlled primarily by regulation of HisG enzymatic activity. The protein is ATP phosphoribosyltransferase of Methylibium petroleiphilum (strain ATCC BAA-1232 / LMG 22953 / PM1).